We begin with the raw amino-acid sequence, 376 residues long: Heme-dependent oxidative N-demethylase gamma subunit (376 aa).

The heme-dependent oxidative N-demethylase (HODM) is a heterotetramer composed of a catalytic alpha subunit, a FMN/2Fe-2S-dependent oxidoreductase beta subunit, a gamma subunit with putative aminotransferase activity, and a delta subunit of unknown function.

Functionally, component of the heme-dependent oxidative N-demethylase (HODM) enzyme, that catalyzes the NADPH-dependent oxidation of dimethylamine (DMA) to methylamine (MA) and formaldehyde. Functions in bacterial methylated amine catabolism, linking alkylamine oxidation to the tetrahydrofolate C1 pool. The gamma subunit of HODM may act as an aminomethyltransferase involved in the detoxification of formaldehyde released by the alpha subunit; this process requires tetrahydrofolate (THF). The polypeptide is Heme-dependent oxidative N-demethylase gamma subunit (Ectopseudomonas mendocina (strain ymp) (Pseudomonas mendocina)).